A 189-amino-acid polypeptide reads, in one-letter code: MNLSATIILAFAMSMDAFAASIGKGATLYKPRFREALRTGLIFGVIEAITPLIGWCIGLFASQYIMEWDHWIAFSLLFILGCRMIFEGMKQRVAETEKMRSHSFWVLVTTAIATSLDAMAIGVGLAFLQVDIVHTAMAIGLATMIMATLGMLIGRYIGPLLGKRAEIIGGIVLIGIGFNILYEHMHLTA.

A run of 6 helical transmembrane segments spans residues 3–23, 41–61, 65–85, 104–124, 132–152, and 167–187; these read LSAT…ASIG, LIFG…GLFA, IMEW…CRMI, FWVL…IGVG, IVHT…LGML, and IIGG…HMHL.

It belongs to the MntP (TC 9.B.29) family.

Its subcellular location is the cell inner membrane. Its function is as follows. Probably functions as a manganese efflux pump. This Yersinia pseudotuberculosis serotype O:1b (strain IP 31758) protein is Putative manganese efflux pump MntP.